A 111-amino-acid chain; its full sequence is Iron-sulfur cluster insertion protein ErpA (111 aa).

Cysteine 39, cysteine 103, and cysteine 105 together coordinate iron-sulfur cluster.

It belongs to the HesB/IscA family. In terms of assembly, homodimer. Iron-sulfur cluster serves as cofactor.

Functionally, required for insertion of 4Fe-4S clusters for at least IspG. The protein is Iron-sulfur cluster insertion protein ErpA of Acinetobacter baumannii (strain SDF).